We begin with the raw amino-acid sequence, 86 residues long: Omega-theraphotoxin-Hhn1a 2 (86 aa).

Positions 1 to 21 (MKSIVFVALLGLALLAVVCSA) are cleaved as a signal peptide. Residues 22–50 (SEDAHKELLKEVVRAMVVDKTDAVQAEER) constitute a propeptide that is removed on maturation. Intrachain disulfides connect Cys52–Cys66, Cys59–Cys71, and Cys65–Cys78.

The protein belongs to the neurotoxin 10 (Hwtx-1) family. 17 (Hntx-9) subfamily. Expressed by the venom gland.

It localises to the secreted. Ion channel inhibitor. This is Omega-theraphotoxin-Hhn1a 2 from Cyriopagopus hainanus (Chinese bird spider).